We begin with the raw amino-acid sequence, 223 residues long: NAD(P)H-hydrate epimerase (223 aa).

The YjeF N-terminal domain occupies 9 to 209 (MQKIDTYTVN…DIGLLTPPDF (201 aa)). 57–61 (NNGAD) contacts (6S)-NADPHX. K(+) contacts are provided by Asn-58 and Asp-119. (6S)-NADPHX-binding positions include 123–129 (GTGLNNL) and Asp-152. Thr-155 contributes to the K(+) binding site.

This sequence belongs to the NnrE/AIBP family. Requires K(+) as cofactor.

It catalyses the reaction (6R)-NADHX = (6S)-NADHX. The enzyme catalyses (6R)-NADPHX = (6S)-NADPHX. Catalyzes the epimerization of the S- and R-forms of NAD(P)HX, a damaged form of NAD(P)H that is a result of enzymatic or heat-dependent hydration. This is a prerequisite for the S-specific NAD(P)H-hydrate dehydratase to allow the repair of both epimers of NAD(P)HX. This chain is NAD(P)H-hydrate epimerase, found in Leuconostoc gelidum subsp. gasicomitatum (strain DSM 15947 / CCUG 46042 / CECT 5767 / JCM 12535 / LMG 18811 / NBRC 113245 / TB1-10) (Leuconostoc gasicomitatum).